The sequence spans 343 residues: Glyceraldehyde-3-phosphate dehydrogenase (343 aa).

Residues 13–14 (TI) and Gly111 contribute to the NAD(+) site. 140 to 142 (SCN) is a binding site for D-glyceraldehyde 3-phosphate. Cys141 (nucleophile) is an active-site residue. Arg169 provides a ligand contact to NAD(+). A D-glyceraldehyde 3-phosphate-binding site is contributed by 195-196 (HA). NAD(+) is bound at residue Gln303.

The protein belongs to the glyceraldehyde-3-phosphate dehydrogenase family. In terms of assembly, homotetramer.

The protein resides in the cytoplasm. The enzyme catalyses D-glyceraldehyde 3-phosphate + phosphate + NADP(+) = (2R)-3-phospho-glyceroyl phosphate + NADPH + H(+). The catalysed reaction is D-glyceraldehyde 3-phosphate + phosphate + NAD(+) = (2R)-3-phospho-glyceroyl phosphate + NADH + H(+). It functions in the pathway carbohydrate degradation; glycolysis; pyruvate from D-glyceraldehyde 3-phosphate: step 1/5. The protein is Glyceraldehyde-3-phosphate dehydrogenase of Sulfolobus acidocaldarius (strain ATCC 33909 / DSM 639 / JCM 8929 / NBRC 15157 / NCIMB 11770).